Consider the following 276-residue polypeptide: L-aminoadipate-semialdehyde dehydrogenase-phosphopantetheinyl transferase (276 aa).

It belongs to the P-Pant transferase superfamily. AcpS family.

The catalysed reaction is apo-[ACP] + CoA = holo-[ACP] + adenosine 3',5'-bisphosphate + H(+). Its function is as follows. Catalyzes the transfer of a 4'-phosphopantetheine moiety from coenzyme A to a serine residue of acceptor proteins, such as alpha-aminoadipate reductase. Necessary for alpha-aminoadipate reductase activity. In Eremothecium gossypii (strain ATCC 10895 / CBS 109.51 / FGSC 9923 / NRRL Y-1056) (Yeast), this protein is L-aminoadipate-semialdehyde dehydrogenase-phosphopantetheinyl transferase (LYS5).